The following is a 1262-amino-acid chain: ATP-dependent helicase/nuclease subunit A (1262 aa).

The UvrD-like helicase ATP-binding domain occupies 5 to 476; sequence FSFTPSQDQA…IVLAENFRSM (472 aa). 26–33 contributes to the ATP binding site; sequence ASAGSGKT. The region spanning 515–808 is the UvrD-like helicase C-terminal domain; it reads DTVTSTAELL…SVMTIHGSKG (294 aa).

This sequence belongs to the helicase family. AddA subfamily. In terms of assembly, heterodimer of AddA and AddB/RexB. It depends on Mg(2+) as a cofactor.

The catalysed reaction is Couples ATP hydrolysis with the unwinding of duplex DNA by translocating in the 3'-5' direction.. It catalyses the reaction ATP + H2O = ADP + phosphate + H(+). The heterodimer acts as both an ATP-dependent DNA helicase and an ATP-dependent, dual-direction single-stranded exonuclease. Recognizes the chi site generating a DNA molecule suitable for the initiation of homologous recombination. The AddA nuclease domain is required for chi fragment generation; this subunit has the helicase and 3' -&gt; 5' nuclease activities. This chain is ATP-dependent helicase/nuclease subunit A, found in Levilactobacillus brevis (strain ATCC 367 / BCRC 12310 / CIP 105137 / JCM 1170 / LMG 11437 / NCIMB 947 / NCTC 947) (Lactobacillus brevis).